We begin with the raw amino-acid sequence, 556 residues long: Glutamine--tRNA ligase (556 aa).

The 'HIGH' region motif lies at 39–49; sequence PEPNGYLHIGH. ATP is bound by residues 40–42 and 46–52; these read EPN and HIGHAKS. Asp72 and Tyr217 together coordinate L-glutamine. ATP is bound by residues Thr236 and 267–268; that span reads RL. The 'KMSKS' region signature appears at 274-278; the sequence is LTSKR.

Belongs to the class-I aminoacyl-tRNA synthetase family. As to quaternary structure, monomer.

The protein resides in the cytoplasm. It carries out the reaction tRNA(Gln) + L-glutamine + ATP = L-glutaminyl-tRNA(Gln) + AMP + diphosphate. In Haemophilus ducreyi (strain 35000HP / ATCC 700724), this protein is Glutamine--tRNA ligase.